The chain runs to 332 residues: Ribosomal RNA small subunit methyltransferase H (332 aa).

S-adenosyl-L-methionine-binding positions include 36–38 (GGY), D54, F81, D102, and Q109. Residues 297–318 (ARSAKLRGAERTEAPAHAAGDL) are disordered.

The protein belongs to the methyltransferase superfamily. RsmH family.

It is found in the cytoplasm. The enzyme catalyses cytidine(1402) in 16S rRNA + S-adenosyl-L-methionine = N(4)-methylcytidine(1402) in 16S rRNA + S-adenosyl-L-homocysteine + H(+). Its function is as follows. Specifically methylates the N4 position of cytidine in position 1402 (C1402) of 16S rRNA. The protein is Ribosomal RNA small subunit methyltransferase H of Rhodopseudomonas palustris (strain TIE-1).